Consider the following 86-residue polypeptide: Large ribosomal subunit protein bL27 (86 aa).

A compositionally biased stretch (gly residues) spans 1 to 10 (MAQKKGGGST). The disordered stretch occupies residues 1-21 (MAQKKGGGSTRNGRDSESKRL).

This sequence belongs to the bacterial ribosomal protein bL27 family.

In Cupriavidus taiwanensis (strain DSM 17343 / BCRC 17206 / CCUG 44338 / CIP 107171 / LMG 19424 / R1) (Ralstonia taiwanensis (strain LMG 19424)), this protein is Large ribosomal subunit protein bL27.